We begin with the raw amino-acid sequence, 602 residues long: Elongation factor 4 (602 aa).

A tr-type G domain is found at 6 to 188; it reads DHIRNFSIVA…AIVNKLPAPK (183 aa). GTP-binding positions include 18 to 23 and 135 to 138; these read DHGKST and NKID.

The protein belongs to the TRAFAC class translation factor GTPase superfamily. Classic translation factor GTPase family. LepA subfamily.

It is found in the cell inner membrane. It catalyses the reaction GTP + H2O = GDP + phosphate + H(+). In terms of biological role, required for accurate and efficient protein synthesis under certain stress conditions. May act as a fidelity factor of the translation reaction, by catalyzing a one-codon backward translocation of tRNAs on improperly translocated ribosomes. Back-translocation proceeds from a post-translocation (POST) complex to a pre-translocation (PRE) complex, thus giving elongation factor G a second chance to translocate the tRNAs correctly. Binds to ribosomes in a GTP-dependent manner. The protein is Elongation factor 4 of Brucella abortus (strain 2308).